The chain runs to 24 residues: Xenoposin precursor fragment B2 (24 aa).

Expressed by the skin glands.

It localises to the secreted. Functionally, has antimicrobial activity against Gram-negative bacterium E.coli ATCC 25922 (MIC=100 uM), Gram-positive bacterium S.auerus ATCC 25923 (MIC=25 uM). The polypeptide is Xenoposin precursor fragment B2 (Xenopus borealis (Kenyan clawed frog)).